Here is a 322-residue protein sequence, read N- to C-terminus: Phosphatidylserine decarboxylase proenzyme (322 aa).

Catalysis depends on charge relay system; for autoendoproteolytic cleavage activity residues Asp90, His147, and Ser254. Ser254 (schiff-base intermediate with substrate; via pyruvic acid; for decarboxylase activity) is an active-site residue. The residue at position 254 (Ser254) is a Pyruvic acid (Ser); by autocatalysis. The interval 293 to 322 (PDAEPAPLPAEEIEAEHDASPLVDDKKDQV) is disordered. Residues 308–322 (EHDASPLVDDKKDQV) are compositionally biased toward basic and acidic residues.

The protein belongs to the phosphatidylserine decarboxylase family. PSD-B subfamily. Prokaryotic type I sub-subfamily. In terms of assembly, heterodimer of a large membrane-associated beta subunit and a small pyruvoyl-containing alpha subunit. Pyruvate serves as cofactor. Post-translationally, is synthesized initially as an inactive proenzyme. Formation of the active enzyme involves a self-maturation process in which the active site pyruvoyl group is generated from an internal serine residue via an autocatalytic post-translational modification. Two non-identical subunits are generated from the proenzyme in this reaction, and the pyruvate is formed at the N-terminus of the alpha chain, which is derived from the carboxyl end of the proenzyme. The autoendoproteolytic cleavage occurs by a canonical serine protease mechanism, in which the side chain hydroxyl group of the serine supplies its oxygen atom to form the C-terminus of the beta chain, while the remainder of the serine residue undergoes an oxidative deamination to produce ammonia and the pyruvoyl prosthetic group on the alpha chain. During this reaction, the Ser that is part of the protease active site of the proenzyme becomes the pyruvoyl prosthetic group, which constitutes an essential element of the active site of the mature decarboxylase.

The protein localises to the cell membrane. It carries out the reaction a 1,2-diacyl-sn-glycero-3-phospho-L-serine + H(+) = a 1,2-diacyl-sn-glycero-3-phosphoethanolamine + CO2. It participates in phospholipid metabolism; phosphatidylethanolamine biosynthesis; phosphatidylethanolamine from CDP-diacylglycerol: step 2/2. Functionally, catalyzes the formation of phosphatidylethanolamine (PtdEtn) from phosphatidylserine (PtdSer). This Escherichia coli (strain 55989 / EAEC) protein is Phosphatidylserine decarboxylase proenzyme.